We begin with the raw amino-acid sequence, 987 residues long: uncharacterized protein (987 aa).

2 consecutive transmembrane segments (helical) span residues 12–32 and 958–978; these read FIYLCILLFVFMASMLNSVSG and VENNFEIFLILINVIFGLGIL.

The protein to M.jannaschii MJ1393 and A.fulgidus AF2028.

The protein resides in the cell membrane. This is an uncharacterized protein from Methanocaldococcus jannaschii (strain ATCC 43067 / DSM 2661 / JAL-1 / JCM 10045 / NBRC 100440) (Methanococcus jannaschii).